The primary structure comprises 579 residues: Proline--tRNA ligase (579 aa).

This sequence belongs to the class-II aminoacyl-tRNA synthetase family. ProS type 1 subfamily. In terms of assembly, homodimer.

It is found in the cytoplasm. The catalysed reaction is tRNA(Pro) + L-proline + ATP = L-prolyl-tRNA(Pro) + AMP + diphosphate. Its function is as follows. Catalyzes the attachment of proline to tRNA(Pro) in a two-step reaction: proline is first activated by ATP to form Pro-AMP and then transferred to the acceptor end of tRNA(Pro). As ProRS can inadvertently accommodate and process non-cognate amino acids such as alanine and cysteine, to avoid such errors it has two additional distinct editing activities against alanine. One activity is designated as 'pretransfer' editing and involves the tRNA(Pro)-independent hydrolysis of activated Ala-AMP. The other activity is designated 'posttransfer' editing and involves deacylation of mischarged Ala-tRNA(Pro). The misacylated Cys-tRNA(Pro) is not edited by ProRS. This is Proline--tRNA ligase from Hamiltonella defensa subsp. Acyrthosiphon pisum (strain 5AT).